Here is a 474-residue protein sequence, read N- to C-terminus: PRAME family member 14 (474 aa).

LRR repeat units lie at residues 15–38, 204–229, 271–294, 319–342, and 391–414; these read QSLL…LYLP, LNSI…CYLK, LLKI…LQNP, LGYL…PLGA, and MGAL…TYPA.

This sequence belongs to the PRAME family.

This Homo sapiens (Human) protein is PRAME family member 14.